The primary structure comprises 940 residues: Inter-alpha-trypsin inhibitor heavy chain H5 (940 aa).

A signal peptide spans 1–16 (MLPLLGLCFALPLCAG). The VIT domain occupies 35–161 (IPRQVRLLQR…KAAFLLSYEE (127 aa)). N-linked (GlcNAc...) asparagine glycosylation is found at N97 and N127. A disordered region spans residues 207 to 227 (NSRQRGSGRGPDDSGPPPSTV). N-linked (GlcNAc...) asparagine glycosylation is found at N231, N421, N508, N694, N778, and N795. The VWFA domain occupies 295 to 478 (NVVFVLDSSA…AQLIGFYDEI (184 aa)).

Belongs to the ITIH family.

It is found in the secreted. Functionally, may act as a tumor suppressor. This is Inter-alpha-trypsin inhibitor heavy chain H5 (ITIH5) from Bos taurus (Bovine).